The chain runs to 766 residues: Hypoxia-inducible factor 1-alpha (766 aa).

The disordered stretch occupies residues 1-26 (MDTGVVPEKKSRVSSDRRKEKSRDAA). Over residues 7-26 (PEKKSRVSSDRRKEKSRDAA) the composition is skewed to basic and acidic residues. Residues 17–70 (RRKEKSRDAARCRRGKESEVFYELAQELPLPHSVTSNLDKASIMRLAISYLHMR) form the bHLH domain. 2 PAS domains span residues 82 to 159 (EERE…TSKK) and 230 to 300 (PHPS…FAKG). One can recognise a PAC domain in the interval 304 to 347 (TGQYRMLAKRGGFVWVETQATVIYNNKNSQPQCVVCVNYVLSGI). A disordered region spans residues 361–383 (DMRPVKKELEEEESSEPEVSPVL). Proline 426 bears the 4-hydroxyproline mark. Residues 475–509 (DQHLVPNTSVDTTEVSTGPDSSSTPGSHSFTEPDS) are disordered. The span at 479–489 (VPNTSVDTTEV) shows a compositional bias: polar residues. The segment covering 490-503 (STGPDSSSTPGSHS) has biased composition (low complexity). A 4-hydroxyproline modification is found at proline 559. The Nuclear localization signal motif lies at 718–721 (LLGI). Asparagine 743 bears the (3S)-3-hydroxyasparagine mark.

In terms of assembly, efficient DNA binding requires heterodimerization of an alpha and a beta/ARNT subunit. In normoxia, is hydroxylated on Pro-426 and Pro-559. The hydroxylated prolines promote interaction with VHL, initiating rapid ubiquitination and subsequent proteasomal degradation. Under hypoxia, proline hydroxylation is impaired and ubiquitination is attenuated, resulting in stabilization. In terms of processing, in normoxia, is hydroxylated on Asn-743, thus abrogating interaction with CREBBP and EP300 and preventing transcriptional activation. Post-translationally, the iron and 2-oxoglutarate dependent 3-hydroxylation of asparagine is (S) stereospecific within HIF CTAD domains.

It is found in the cytoplasm. Its subcellular location is the nucleus. It localises to the nucleus speckle. Its activity is regulated as follows. Induced by reactive oxygen species (ROS). Functions as a master transcriptional regulator of the adaptive response to hypoxia. Under hypoxic conditions, activates the transcription of over 40 genes, including erythropoietin, glucose transporters, glycolytic enzymes, vascular endothelial growth factor, HILPDA, and other genes whose protein products increase oxygen delivery or facilitate metabolic adaptation to hypoxia. Plays an essential role in embryonic vascularization, tumor angiogenesis and pathophysiology of ischemic disease. In Oncorhynchus mykiss (Rainbow trout), this protein is Hypoxia-inducible factor 1-alpha (hif1a).